A 142-amino-acid chain; its full sequence is MLNEFKEFIARGNVMDLAVGVIIGAAFTKIVTSVVDDLVMPIVGAITGGGFDFSNYFLPLSANVTAPTLAAARQQGAVFAYGSFITVLINFMILAWIIFLLVKAVNRIRASVEREKAPEPAAPPPEDVRLLSEIRDILKQRA.

The next 3 helical transmembrane spans lie at 14–34 (VMDL…VTSV), 38–58 (LVMP…NYFL), and 82–102 (GSFI…FLLV).

This sequence belongs to the MscL family. In terms of assembly, homopentamer.

The protein resides in the cell inner membrane. Channel that opens in response to stretch forces in the membrane lipid bilayer. May participate in the regulation of osmotic pressure changes within the cell. The protein is Large-conductance mechanosensitive channel of Sinorhizobium fredii (strain NBRC 101917 / NGR234).